The following is a 431-amino-acid chain: Putative helicase 055L (431 aa).

Residues 73-222 (WGHVTSKGYC…ALGAFFGRED (150 aa)) enclose the Helicase ATP-binding domain. 86 to 93 (CPPGFGKT) is a binding site for ATP. Positions 175 to 178 (DEAH) match the DEAH box motif. The disordered stretch occupies residues 403 to 431 (KCDASRPSQSTPTPTGSSQPAPRTRRPQR). Over residues 407–424 (SRPSQSTPTPTGSSQPAP) the composition is skewed to low complexity.

The polypeptide is Putative helicase 055L (Frog virus 3 (isolate Goorha) (FV-3)).